The sequence spans 376 residues: O-demethylpuromycin-O-methyltransferase (376 aa).

The interval 1-28 (MAPTEATRGGPADPAPAPEAHRGGHTEH) is disordered. Residues 19–28 (EAHRGGHTEH) show a composition bias toward basic and acidic residues. S-adenosyl-L-methionine is bound by residues aspartate 235 and 261-263 (GDF). Histidine 281 acts as the Proton acceptor in catalysis.

It belongs to the class I-like SAM-binding methyltransferase superfamily. Cation-independent O-methyltransferase family.

The enzyme catalyses O-demethylpuromycin + S-adenosyl-L-methionine = puromycin + S-adenosyl-L-homocysteine + H(+). This is O-demethylpuromycin-O-methyltransferase (dmpM) from Streptomyces alboniger.